Reading from the N-terminus, the 401-residue chain is Phosphoglycerate kinase (401 aa).

Substrate contacts are provided by residues 20–22 (DFN), Arg35, 58–61 (HLGR), Arg117, and Arg154. ATP-binding positions include Lys204, Gly298, Glu329, and 358 to 361 (GGDS).

It belongs to the phosphoglycerate kinase family. In terms of assembly, monomer.

The protein resides in the cytoplasm. It catalyses the reaction (2R)-3-phosphoglycerate + ATP = (2R)-3-phospho-glyceroyl phosphate + ADP. It functions in the pathway carbohydrate degradation; glycolysis; pyruvate from D-glyceraldehyde 3-phosphate: step 2/5. The polypeptide is Phosphoglycerate kinase (Bifidobacterium longum (strain DJO10A)).